The primary structure comprises 849 residues: MPLLSKCFPCFKFKREEVIDKLDYSNTPLTDFPEVWQHERTLEELYLSTTRLQALPPQLFYCQGLRVLHVNSNNLESIPQAIGSLRQLQHLDLNRNLIVNVPEEIKSCKHLTHLDLSCNSLQRLPDAITSLISLQELLLNETYLEFLPANFGRLVNLRILELRLNNLMTLPKSMVRLINLQRLDIGGNEFTELPEVVGELKSLRELWIDFNQIRRVSANIGKLRDLQHFEANGNLLDTLPSELSNWRNVEVLSICSNSLEAFPFSVGMLKSLVTFKCESNGLTELPDSISYLEQLEELVLSHNKLIRLPSTIGMLRSLRFLFADDNQLRQLPDELCSCQQLSVLSVANNQLSALPQNIGNLSKMKVLNVVNNYINALPVSMLNLVNLTSMWLSDNQSQPLVPLQYLDASTKTQLTCFMLPQVTFKMNSIQAQQQAQEQYEFVYANQQQPHASPSRRICFAEEATILSNAKAQPAPNYPSFVAAPPTPTPDQMAGSVRLMRSPTPYPKELRQMSKYVRQAQAATSSANASEVREARVVTNGQIHCDSNNANQDVVDQATTSAIYGIAPETTHIYGVYQQPQQMAHPVPTQEYYGLPLVNYEAHYQQLYVEANTPLPTTHLNGDQDYELQPLQQQPMQQQALPTPRLEPPPYHIARVYTKKTPEDLNLYESMRQRKQQQQLQEQTIYQDALNSNSNFKTTAIGAQDVEESVDQLDYQNNISNNLEPNPEEEDQELDDTMSQHSLNSTATNNTSKASHKKSTWIFGVHKNPTVKQVTLKWENSIGFDIAELLNQVGIFVSSITPNTNAARLLNLNDKLLEIDGYDLTNANLSDAKRVLLNCGTVMNIMLSRK.

LRR repeat units follow at residues 18 to 39 (VIDKLDYSNTPLTDFPEVWQHE), 41 to 62 (TLEELYLSTTRLQALPPQLFYC), 64 to 85 (GLRVLHVNSNNLESIPQAIGSL), 87 to 108 (QLQHLDLNRNLIVNVPEEIKSC), 110 to 131 (HLTHLDLSCNSLQRLPDAITSL), 133 to 155 (SLQELLLNETYLEFLPANFGRLV), 156 to 177 (NLRILELRLNNLMTLPKSMVRL), 179 to 200 (NLQRLDIGGNEFTELPEVVGEL), 202 to 224 (SLRELWIDFNQIRRVSANIGKLR), 225 to 246 (DLQHFEANGNLLDTLPSELSNW), 248 to 269 (NVEVLSICSNSLEAFPFSVGML), 271 to 292 (SLVTFKCESNGLTELPDSISYL), 294 to 315 (QLEELVLSHNKLIRLPSTIGML), 317 to 338 (SLRFLFADDNQLRQLPDELCSC), 340 to 362 (QLSVLSVANNQLSALPQNIGNLS), 363 to 384 (KMKVLNVVNNYINALPVSMLNL), and 386 to 407 (NLTSMWLSDNQSQPLVPLQYLD). Positions 716–752 (NNISNNLEPNPEEEDQELDDTMSQHSLNSTATNNTSK) are disordered. Residues 725–735 (NPEEEDQELDD) show a composition bias toward acidic residues. Residues 736-752 (TMSQHSLNSTATNNTSK) are compositionally biased toward polar residues. A PDZ domain is found at 770–849 (VKQVTLKWEN…TVMNIMLSRK (80 aa)).

It belongs to the LAP (LRR and PDZ) protein family.

Its function is as follows. May have a role in assembling adherens junctions. In Drosophila melanogaster (Fruit fly), this protein is Protein lap1.